Here is a 675-residue protein sequence, read N- to C-terminus: NADH-ubiquinone oxidoreductase 75 kDa subunit (675 aa).

Residues 2 to 80 (KNISFKVNDF…SMNIYTNTLK (79 aa)) enclose the 2Fe-2S ferredoxin-type domain. [2Fe-2S] cluster is bound by residues Cys36, Cys47, Cys50, and Cys64. A 4Fe-4S His(Cys)3-ligated-type domain is found at 80-119 (KVKKARESVLEFLLANHPLDCPICDQGGECDLQDQSVVFG). [4Fe-4S] cluster-binding residues include His96, Cys100, Cys103, Cys109, Cys148, Cys151, Cys154, and Cys198. One can recognise a 4Fe-4S Mo/W bis-MGD-type domain in the interval 217-273 (LKSYNSIDVLDSLHSNIRVDIRGTKIMRILPRVNSELNEDWITDKIRFSYDSFRRQR).

Belongs to the complex I 75 kDa subunit family. Complex I is composed of about 30 different subunits. Requires [2Fe-2S] cluster as cofactor. [4Fe-4S] cluster is required as a cofactor.

It localises to the mitochondrion inner membrane. The enzyme catalyses a ubiquinone + NADH + 5 H(+)(in) = a ubiquinol + NAD(+) + 4 H(+)(out). In terms of biological role, core subunit of the mitochondrial membrane respiratory chain NADH dehydrogenase (Complex I) that is believed to belong to the minimal assembly required for catalysis. Complex I functions in the transfer of electrons from NADH to the respiratory chain. The immediate electron acceptor for the enzyme is believed to be ubiquinone. This is the largest subunit of complex I and it is a component of the iron-sulfur (IP) fragment of the enzyme. It may form part of the active site crevice where NADH is oxidized. The polypeptide is NADH-ubiquinone oxidoreductase 75 kDa subunit (NAD11) (Acanthamoeba castellanii (Amoeba)).